The primary structure comprises 545 residues: T-complex protein 1 subunit gamma (545 aa).

The residue at position 1 (Met-1) is an N-acetylmethionine. The segment at Met-1 to Ser-24 is disordered. Ser-11 carries the post-translational modification Phosphoserine. Lys-15 participates in a covalent cross-link: Glycyl lysine isopeptide (Lys-Gly) (interchain with G-Cter in SUMO2). Gly-42 lines the ADP pocket. Gly-42 contacts ATP. Asp-93 is a Mg(2+) binding site. 6 residues coordinate ADP: Gly-94, Thr-95, Thr-96, Ser-97, Thr-162, and Lys-163. ATP-binding residues include Gly-94, Thr-95, and Thr-96. Position 170 is a phosphoserine (Ser-170). At Lys-222 the chain carries N6-acetyllysine. Ser-243 and Ser-244 each carry phosphoserine. At Tyr-247 the chain carries Phosphotyrosine. Residues Lys-248 and Lys-249 each participate in a glycyl lysine isopeptide (Lys-Gly) (interchain with G-Cter in SUMO2) cross-link. The residue at position 252 (Ser-252) is a Phosphoserine. A disulfide bond links Cys-366 and Cys-372. Lys-381 participates in a covalent cross-link: Glycyl lysine isopeptide (Lys-Gly) (interchain with G-Cter in SUMO2). An ADP-binding site is contributed by Gly-411. Residue Gly-411 participates in ATP binding. Phosphothreonine is present on residues Thr-430 and Thr-459. 4 residues coordinate ADP: Gly-482, Glu-483, Glu-497, and Lys-502. Gly-482 contacts ATP. Glu-497 provides a ligand contact to ATP. Positions His-526 to Glu-545 are disordered.

This sequence belongs to the TCP-1 chaperonin family. In terms of assembly, component of the chaperonin-containing T-complex (TRiC), a hexadecamer composed of two identical back-to-back stacked rings enclosing a protein folding chamber. Each ring is made up of eight different subunits: TCP1/CCT1, CCT2, CCT3, CCT4, CCT5, CCT6A/CCT6, CCT7, CCT8. Interacts with PACRG. Interacts with DNAAF4. Interacts with DLEC1.

It is found in the cytoplasm. The catalysed reaction is ATP + H2O = ADP + phosphate + H(+). In terms of biological role, component of the chaperonin-containing T-complex (TRiC), a molecular chaperone complex that assists the folding of actin, tubulin and other proteins upon ATP hydrolysis. The TRiC complex mediates the folding of WRAP53/TCAB1, thereby regulating telomere maintenance. As part of the TRiC complex may play a role in the assembly of BBSome, a complex involved in ciliogenesis regulating transports vesicles to the cilia. The protein is T-complex protein 1 subunit gamma (CCT3) of Pongo abelii (Sumatran orangutan).